A 236-amino-acid chain; its full sequence is Large ribosomal subunit protein uL1 (236 aa).

This sequence belongs to the universal ribosomal protein uL1 family. In terms of assembly, part of the 50S ribosomal subunit.

In terms of biological role, binds directly to 23S rRNA. The L1 stalk is quite mobile in the ribosome, and is involved in E site tRNA release. Functionally, protein L1 is also a translational repressor protein, it controls the translation of the L11 operon by binding to its mRNA. This Protochlamydia amoebophila (strain UWE25) protein is Large ribosomal subunit protein uL1.